The following is a 717-amino-acid chain: DNA-directed RNA polymerase subunit beta' (717 aa).

Cysteine 71, cysteine 73, cysteine 91, and cysteine 94 together coordinate Zn(2+). Positions 481, 483, and 485 each coordinate Mg(2+).

The protein belongs to the RNA polymerase beta' chain family. RpoC1 subfamily. In terms of assembly, in plastids the minimal PEP RNA polymerase catalytic core is composed of four subunits: alpha, beta, beta', and beta''. When a (nuclear-encoded) sigma factor is associated with the core the holoenzyme is formed, which can initiate transcription. Requires Mg(2+) as cofactor. Zn(2+) serves as cofactor.

It localises to the plastid. The protein localises to the chloroplast. The enzyme catalyses RNA(n) + a ribonucleoside 5'-triphosphate = RNA(n+1) + diphosphate. In terms of biological role, DNA-dependent RNA polymerase catalyzes the transcription of DNA into RNA using the four ribonucleoside triphosphates as substrates. The sequence is that of DNA-directed RNA polymerase subunit beta' from Chlorokybus atmophyticus (Soil alga).